We begin with the raw amino-acid sequence, 299 residues long: Putative transposase InsZ (299 aa).

Residues Pro276–Val291 are compositionally biased toward basic residues. Residues Pro276–Lys299 are disordered.

This Escherichia coli (strain K12) protein is Putative transposase InsZ (insZ).